We begin with the raw amino-acid sequence, 271 residues long: Regulatory protein RecX (271 aa).

This sequence belongs to the RecX family.

The protein resides in the cytoplasm. In terms of biological role, modulates RecA activity. In Lactobacillus gasseri (strain ATCC 33323 / DSM 20243 / BCRC 14619 / CIP 102991 / JCM 1131 / KCTC 3163 / NCIMB 11718 / NCTC 13722 / AM63), this protein is Regulatory protein RecX.